We begin with the raw amino-acid sequence, 528 residues long: Phosphoenolpyruvate carboxykinase (ATP) (528 aa).

Arg54, Tyr190, and Lys196 together coordinate substrate. ATP contacts are provided by residues Lys196, His215, and Gly231–Thr239. Mn(2+)-binding residues include Lys196 and His215. Asp252 provides a ligand contact to Mn(2+). Positions 280, 316, and 441 each coordinate ATP. Position 316 (Arg316) interacts with substrate.

This sequence belongs to the phosphoenolpyruvate carboxykinase (ATP) family. Requires Mn(2+) as cofactor.

It localises to the cytoplasm. It carries out the reaction oxaloacetate + ATP = phosphoenolpyruvate + ADP + CO2. It participates in carbohydrate biosynthesis; gluconeogenesis. Its function is as follows. Involved in the gluconeogenesis. Catalyzes the conversion of oxaloacetate (OAA) to phosphoenolpyruvate (PEP) through direct phosphoryl transfer between the nucleoside triphosphate and OAA. In Sulfurimonas denitrificans (strain ATCC 33889 / DSM 1251) (Thiomicrospira denitrificans (strain ATCC 33889 / DSM 1251)), this protein is Phosphoenolpyruvate carboxykinase (ATP).